Here is a 212-residue protein sequence, read N- to C-terminus: Uracil phosphoribosyltransferase (212 aa).

Residues R78, R103, and D130 to S138 contribute to the 5-phospho-alpha-D-ribose 1-diphosphate site. Uracil contacts are provided by residues I193 and G198–A200. Residue D199 coordinates 5-phospho-alpha-D-ribose 1-diphosphate.

Belongs to the UPRTase family. It depends on Mg(2+) as a cofactor.

It catalyses the reaction UMP + diphosphate = 5-phospho-alpha-D-ribose 1-diphosphate + uracil. It functions in the pathway pyrimidine metabolism; UMP biosynthesis via salvage pathway; UMP from uracil: step 1/1. With respect to regulation, allosterically activated by GTP. Its function is as follows. Catalyzes the conversion of uracil and 5-phospho-alpha-D-ribose 1-diphosphate (PRPP) to UMP and diphosphate. The chain is Uracil phosphoribosyltransferase from Bordetella petrii (strain ATCC BAA-461 / DSM 12804 / CCUG 43448).